Here is a 192-residue protein sequence, read N- to C-terminus: Fe/S biogenesis protein NfuA (192 aa).

2 residues coordinate [4Fe-4S] cluster: C149 and C152.

Belongs to the NfuA family. Homodimer. [4Fe-4S] cluster serves as cofactor.

Involved in iron-sulfur cluster biogenesis. Binds a 4Fe-4S cluster, can transfer this cluster to apoproteins, and thereby intervenes in the maturation of Fe/S proteins. Could also act as a scaffold/chaperone for damaged Fe/S proteins. The polypeptide is Fe/S biogenesis protein NfuA (Shewanella pealeana (strain ATCC 700345 / ANG-SQ1)).